The primary structure comprises 430 residues: Adenylosuccinate synthetase (430 aa).

Residues 11–17 (GDEGKGK) and 39–41 (GHT) contribute to the GTP site. Residue aspartate 12 is the Proton acceptor of the active site. Positions 12 and 39 each coordinate Mg(2+). Residues 12–15 (DEGK), 37–40 (NAGH), threonine 130, arginine 144, asparagine 226, threonine 241, and arginine 305 each bind IMP. The active-site Proton donor is histidine 40. Position 301–307 (301–307 (VTTGRKR)) interacts with substrate. Residues arginine 307, 333 to 335 (KLD), and 415 to 417 (GTG) contribute to the GTP site.

This sequence belongs to the adenylosuccinate synthetase family. As to quaternary structure, homodimer. It depends on Mg(2+) as a cofactor.

Its subcellular location is the cytoplasm. The catalysed reaction is IMP + L-aspartate + GTP = N(6)-(1,2-dicarboxyethyl)-AMP + GDP + phosphate + 2 H(+). Its pathway is purine metabolism; AMP biosynthesis via de novo pathway; AMP from IMP: step 1/2. Its function is as follows. Plays an important role in the de novo pathway and in the salvage pathway of purine nucleotide biosynthesis. Catalyzes the first committed step in the biosynthesis of AMP from IMP. The chain is Adenylosuccinate synthetase from Scheffersomyces stipitis (strain ATCC 58785 / CBS 6054 / NBRC 10063 / NRRL Y-11545) (Yeast).